We begin with the raw amino-acid sequence, 418 residues long: Voltage-gated ClC-type chloride channel ClcB (418 aa).

10 consecutive transmembrane segments (helical) span residues 5–25, 54–74, 146–166, 168–188, 222–242, 258–278, 291–311, 316–336, 352–372, and 380–400; these read LLIA…FRHA, LLTP…WQKF, LWIA…PLAG, LFIA…PVII, ALII…LTLM, WQLA…PAVW, APPL…AVLA, GAPG…GMLY, LLLG…APIM, and MTGE…ASVI.

Belongs to the chloride channel (TC 2.A.49) family. ClcB subfamily.

The protein resides in the cell inner membrane. Its function is as follows. Probably acts as an electrical shunt for an outwardly-directed proton pump that is linked to amino acid decarboxylation, as part of the extreme acid resistance (XAR) response. This chain is Voltage-gated ClC-type chloride channel ClcB, found in Escherichia coli (strain ATCC 8739 / DSM 1576 / NBRC 3972 / NCIMB 8545 / WDCM 00012 / Crooks).